Consider the following 1603-residue polypeptide: Gag-Pol polyprotein (1603 aa).

The segment covering valine 128–proline 141 has biased composition (basic and acidic residues). The disordered stretch occupies residues valine 128–valine 150. A PPXY motif motif is present at residues proline 172–tyrosine 175. An LYPX(n)L motif motif is present at residues leucine 180–leucine 184. The tract at residues tyrosine 181 to proline 215 is disordered. A Nuclear export signal motif is present at residues leucine 219–leucine 229. 2 CCHC-type zinc fingers span residues arginine 507–lysine 524 and glutamate 533–arginine 550. A disordered region spans residues asparagine 544 to serine 571. Positions isoleucine 609–cysteine 690 constitute a Peptidase A2 domain. Aspartate 614 serves as the catalytic For protease activity; shared with dimeric partner. The region spanning leucine 750–leucine 938 is the Reverse transcriptase domain. Aspartate 815, aspartate 890, aspartate 891, aspartate 1158, glutamate 1192, aspartate 1213, and aspartate 1272 together coordinate Mg(2+). The region spanning proline 1149 to tyrosine 1280 is the RNase H type-1 domain. An Integrase-type zinc finger spans residues tyrosine 1280–asparagine 1321. Zn(2+) contacts are provided by histidine 1289, histidine 1293, cysteine 1317, and cysteine 1320. Residues arginine 1333–threonine 1496 enclose the Integrase catalytic domain. Mg(2+) contacts are provided by aspartate 1344, aspartate 1401, and glutamate 1437. The segment at residues proline 1502–threonine 1550 is a DNA-binding region (integrase-type). The tract at residues aspartate 1548–glycine 1567 is involved in homooctamerization. Basic and acidic residues predominate over residues isoleucine 1549–alanine 1561. The interval isoleucine 1549–serine 1603 is disordered.

Active as a homodimer. In terms of assembly, homodimer. Homomultimer. Homohexamer. As to quaternary structure, homodimer; further associates as a homooctamer. Heterodimer of alpha and beta subunits. Three forms of RT exist: alpha-alpha (alpha-Pol), beta-beta (beta-Pol), and alpha-beta, with the major form being the heterodimer. Both the polymerase and RNase H active sites are located in the alpha subunit of heterodimeric RT alpha-beta. Mg(2+) is required as a cofactor. Mn(2+) serves as cofactor. Specific enzymatic cleavages in vivo yield mature proteins. In terms of processing, capsid protein p27: The cleavage at the C-terminus is slowly trimmed by the viral protease, sometimes being cut internally thereby generating the short version of the capsid protein and a capsid protein C-terminally extended by 3 amino acids in a ratio of 2:1.

The protein localises to the virion. It carries out the reaction DNA(n) + a 2'-deoxyribonucleoside 5'-triphosphate = DNA(n+1) + diphosphate. The enzyme catalyses Endonucleolytic cleavage to 5'-phosphomonoester.. Capsid protein p27: Self-associates to form the irregular polyhedron core composed of hexamers and pentamers, that encapsulates the genomic RNA-nucleocapsid complex. Assembles as a tube in vitro. Binds to inositol hexakisphosphate (IP6), which allows the assembly of the polyhedral capsid. Its function is as follows. Plays a role in the oligomerization of the Gag polyprotein and in the stabilization of the immature particle. Essential layering element during tube assembly. Allows the cooperative binging of Gag to the host plasma membrane. In terms of biological role, binds strongly to viral nucleic acids and promotes their packaging. Plays a role in the maturation-stabilization of the viral dimeric RNA via highly structured zinc-binding motifs. Functionally, the aspartyl protease mediates proteolytic cleavages of Gag and Gag-Pol polyproteins during or shortly after the release of the virion from the plasma membrane. Cleavages take place as an ordered, step-wise cascade to yield mature proteins. This process is called maturation. Displays maximal activity during the budding process just prior to particle release from the cell. Catalyzes viral DNA integration into the host chromosome, by performing a series of DNA cutting and joining reactions. This recombination event is an essential step in the viral replication cycle. Has a strong preference for using the 3'-OH at the viral DNA end as a nucleophile. This chain is Gag-Pol polyprotein (gag-pol), found in Rous sarcoma virus subgroup B (strain Schmidt-Ruppin) (RSV-SR-B).